The chain runs to 211 residues: ATP phosphoribosyltransferase (211 aa).

Belongs to the ATP phosphoribosyltransferase family. Short subfamily. As to quaternary structure, heteromultimer composed of HisG and HisZ subunits.

The protein resides in the cytoplasm. It catalyses the reaction 1-(5-phospho-beta-D-ribosyl)-ATP + diphosphate = 5-phospho-alpha-D-ribose 1-diphosphate + ATP. It participates in amino-acid biosynthesis; L-histidine biosynthesis; L-histidine from 5-phospho-alpha-D-ribose 1-diphosphate: step 1/9. In terms of biological role, catalyzes the condensation of ATP and 5-phosphoribose 1-diphosphate to form N'-(5'-phosphoribosyl)-ATP (PR-ATP). Has a crucial role in the pathway because the rate of histidine biosynthesis seems to be controlled primarily by regulation of HisG enzymatic activity. The polypeptide is ATP phosphoribosyltransferase (Clostridium botulinum (strain 657 / Type Ba4)).